The sequence spans 87 residues: Large ribosomal subunit protein bL27 (87 aa).

The protein belongs to the bacterial ribosomal protein bL27 family.

The protein is Large ribosomal subunit protein bL27 of Renibacterium salmoninarum (strain ATCC 33209 / DSM 20767 / JCM 11484 / NBRC 15589 / NCIMB 2235).